A 221-amino-acid polypeptide reads, in one-letter code: Chalcone--flavanone isomerase (221 aa).

The substrate site is built by threonine 52, asparagine 117, and serine 193.

Belongs to the chalcone isomerase family. As to expression, flowers.

It carries out the reaction a chalcone = a flavanone.. It participates in secondary metabolite biosynthesis; flavonoid biosynthesis. Catalyzes the intramolecular cyclization of bicyclic chalcones into tricyclic (S)-flavanones. Responsible for the isomerization of 4,2',4',6'-tetrahydroxychalcone (also termed chalcone) into naringenin. This chain is Chalcone--flavanone isomerase (CHI), found in Gentiana triflora (Clustered gentian).